Consider the following 320-residue polypeptide: MSVGILGAGAFGTALAISLGHTTPVTLWARDAKQAQVMQNTRENTARLPGFALPAGVKVTSNLADLQGCDVLLLAVPAQKLRQFLRGLDQMVAGKTLVTCCKGIELETGMGPVDIAREICPQSEHAILTGPSFANDIAKGLPTALTLACANPDRARQLQQELSNGTLRLYRTSDVIGAQLGGALKNVIAIACGAAIGAQLGESARAALMTRGNAEMQRYAQHKGADASTLSGLSGFGDLVLTCTSELSRNYRFGLALGAGKAFDPATTVEGAATACAVAQEAREKALDMPISSVVAALVENRLDVENAMTKLLSRSLKEE.

NADPH is bound by residues Phe-11, Arg-30, and Lys-102. Positions 102, 130, and 132 each coordinate sn-glycerol 3-phosphate. Ala-134 provides a ligand contact to NADPH. Sn-glycerol 3-phosphate contacts are provided by Lys-185, Asp-238, Ser-248, Arg-249, and Asn-250. Lys-185 acts as the Proton acceptor in catalysis. Arg-249 is an NADPH binding site. Glu-270 provides a ligand contact to NADPH.

Belongs to the NAD-dependent glycerol-3-phosphate dehydrogenase family.

The protein localises to the cytoplasm. It catalyses the reaction sn-glycerol 3-phosphate + NAD(+) = dihydroxyacetone phosphate + NADH + H(+). The enzyme catalyses sn-glycerol 3-phosphate + NADP(+) = dihydroxyacetone phosphate + NADPH + H(+). It functions in the pathway membrane lipid metabolism; glycerophospholipid metabolism. Its function is as follows. Catalyzes the reduction of the glycolytic intermediate dihydroxyacetone phosphate (DHAP) to sn-glycerol 3-phosphate (G3P), the key precursor for phospholipid synthesis. The sequence is that of Glycerol-3-phosphate dehydrogenase [NAD(P)+] from Roseobacter denitrificans (strain ATCC 33942 / OCh 114) (Erythrobacter sp. (strain OCh 114)).